The following is a 136-amino-acid chain: Large ribosomal subunit protein bL19 (136 aa).

A disordered region spans residues 1–23; the sequence is MEETVNNQETPETSEEETADEET. Positions 12-23 are enriched in acidic residues; sequence ETSEEETADEET.

It belongs to the bacterial ribosomal protein bL19 family.

In terms of biological role, this protein is located at the 30S-50S ribosomal subunit interface and may play a role in the structure and function of the aminoacyl-tRNA binding site. The protein is Large ribosomal subunit protein bL19 of Dehalococcoides mccartyi (strain ATCC BAA-2266 / KCTC 15142 / 195) (Dehalococcoides ethenogenes (strain 195)).